Reading from the N-terminus, the 139-residue chain is MLMPKRVKYRKSQRGRMKGNSGRGTSVSFGSFGLKAMEPAWITSRQIEAARVAMNRYMKRDGKIWIRIFPDKPVSKKAAETRMGSGKGSPEFWVAVVKPGRIMFEAEGVSREVATEAFRLAAQKLPIKTKFIVRPDYEG.

Over residues 1–17 (MLMPKRVKYRKSQRGRM) the composition is skewed to basic residues. Residues 1-24 (MLMPKRVKYRKSQRGRMKGNSGRG) are disordered.

This sequence belongs to the universal ribosomal protein uL16 family. In terms of assembly, part of the 50S ribosomal subunit.

Its function is as follows. Binds 23S rRNA and is also seen to make contacts with the A and possibly P site tRNAs. The chain is Large ribosomal subunit protein uL16 from Chlorobium limicola (strain DSM 245 / NBRC 103803 / 6330).